The following is a 200-amino-acid chain: NADH-quinone oxidoreductase subunit C (200 aa).

It belongs to the complex I 30 kDa subunit family. As to quaternary structure, NDH-1 is composed of 14 different subunits. Subunits NuoB, C, D, E, F, and G constitute the peripheral sector of the complex.

The protein resides in the cell inner membrane. The catalysed reaction is a quinone + NADH + 5 H(+)(in) = a quinol + NAD(+) + 4 H(+)(out). Its function is as follows. NDH-1 shuttles electrons from NADH, via FMN and iron-sulfur (Fe-S) centers, to quinones in the respiratory chain. The immediate electron acceptor for the enzyme in this species is believed to be ubiquinone. Couples the redox reaction to proton translocation (for every two electrons transferred, four hydrogen ions are translocated across the cytoplasmic membrane), and thus conserves the redox energy in a proton gradient. This chain is NADH-quinone oxidoreductase subunit C, found in Burkholderia mallei (strain NCTC 10247).